Reading from the N-terminus, the 193-residue chain is Xanthine phosphoribosyltransferase (193 aa).

Positions 20 and 27 each coordinate xanthine. 127 to 131 (AYGNA) serves as a coordination point for 5-phospho-alpha-D-ribose 1-diphosphate. Lysine 155 contributes to the xanthine binding site.

The protein belongs to the purine/pyrimidine phosphoribosyltransferase family. Xpt subfamily. As to quaternary structure, homodimer.

It is found in the cytoplasm. It catalyses the reaction XMP + diphosphate = xanthine + 5-phospho-alpha-D-ribose 1-diphosphate. It functions in the pathway purine metabolism; XMP biosynthesis via salvage pathway; XMP from xanthine: step 1/1. In terms of biological role, converts the preformed base xanthine, a product of nucleic acid breakdown, to xanthosine 5'-monophosphate (XMP), so it can be reused for RNA or DNA synthesis. The polypeptide is Xanthine phosphoribosyltransferase (Porphyromonas gingivalis (strain ATCC BAA-308 / W83)).